The following is a 341-amino-acid chain: KRR1 small subunit processome component homolog (341 aa).

The KH domain occupies Asp126–Asn194. The segment covering Lys230–Lys244 has biased composition (basic residues). Residues Lys230–Val327 are disordered. A coiled-coil region spans residues Phe271–Lys341. Basic and acidic residues-rich tracts occupy residues Leu272–Asp303 and Glu313–Val327.

The protein belongs to the KRR1 family. Monomer. Component of the ribosomal small subunit (SSU) processome.

The protein resides in the nucleus. It is found in the nucleolus. Functionally, required for 40S ribosome biogenesis. Involved in nucleolar processing of pre-18S ribosomal RNA and ribosome assembly. Binds to RNA. Required for female germline development, cell viability during eye development and for survival of dividing cells and epithelial cells during early wing disk development. This is KRR1 small subunit processome component homolog from Drosophila grimshawi (Hawaiian fruit fly).